Reading from the N-terminus, the 235-residue chain is uncharacterized protein (235 aa).

Disordered stretches follow at residues 60 to 96 and 192 to 235; these read SSNRSMSIDSLTGKKRPHDISFQNMNSSMPSSTQKKT and LNTS…YDSF. Residues 80-93 are compositionally biased toward polar residues; it reads SFQNMNSSMPSSTQ. Positions 197 to 214 are enriched in acidic residues; sequence SEDDTESIVETDYSEEEK.

Belongs to the asfivirus DP238L family.

This is an uncharacterized protein from Ornithodoros (relapsing fever ticks).